Here is a 564-residue protein sequence, read N- to C-terminus: Centrosomal protein kizuna (564 aa).

Residues 1 to 21 (MSEAGRAAAGPCPEVSPSRSQ) are disordered. Positions 28-50 (RCLRDSETRRLELERKLMEYKSS) form a coiled coil. Disordered regions lie at residues 178-201 (QPAA…PTQA), 304-345 (TGPQ…EDEP), 442-465 (ECGD…PNDS), 487-519 (IGNN…RPEF), and 531-564 (AFWG…DFYD). Over residues 313 to 324 (QQAASQDSSSSS) the composition is skewed to low complexity. Over residues 447–463 (SSVQSNESSYSLPSIPN) the composition is skewed to polar residues. The span at 493–519 (EAKESQEMCSERSSSSERSGDLSRPEF) shows a compositional bias: basic and acidic residues.

It belongs to the kizuna family.

The protein resides in the cytoplasm. It is found in the cytoskeleton. The protein localises to the microtubule organizing center. Its subcellular location is the centrosome. It localises to the cilium basal body. Its function is as follows. Centrosomal protein required for establishing a robust mitotic centrosome architecture that can endure the forces that converge on the centrosomes during spindle formation. Required for stabilizing the expanded pericentriolar material around the centriole. This Gallus gallus (Chicken) protein is Centrosomal protein kizuna (KIZ).